The sequence spans 411 residues: Metacaspase-1B (411 aa).

The tract at residues 1–97 (MYHRHSAPPP…PPLEAQQFGN (97 aa)) is disordered. Residues 7–65 (APPPPGRSRGYPPPQQQWPPQPYQYLPYPPQGPPPAHTFPPPAHRSYPSPYPTPPPHSP) are compositionally biased toward pro residues. Active-site residues include His-198 and Cys-254.

This sequence belongs to the peptidase C14B family.

Its function is as follows. Involved in cell death (apoptosis). This chain is Metacaspase-1B (casB), found in Neosartorya fischeri (strain ATCC 1020 / DSM 3700 / CBS 544.65 / FGSC A1164 / JCM 1740 / NRRL 181 / WB 181) (Aspergillus fischerianus).